The primary structure comprises 134 residues: Interleukin-5 (134 aa).

The first 19 residues, 1-19 (MRMLLHLSLLALGAAYVSA), serve as a signal peptide directing secretion. Residues Asn-76 and Asn-90 are each glycosylated (N-linked (GlcNAc...) asparagine).

It belongs to the IL-5 family. As to quaternary structure, homodimer; disulfide-linked. Interacts with IL5RA. Interacts with CSF2RB.

Its subcellular location is the secreted. In terms of biological role, homodimeric cytokine expressed predominantly by T-lymphocytes and NK cells that plays an important role in the survival, differentiation, and chemotaxis of eosinophils. Also acts on activated and resting B-cells to induce immunoglobulin production, growth, and differentiation. Mechanistically, exerts its biological effects through a receptor composed of IL5RA subunit and the cytokine receptor common subunit beta/CSF2RB. Binding to the receptor leads to activation of various kinases including LYN, SYK and JAK2 and thereby propagates signals through the RAS-MAPK and JAK-STAT5 pathways respectively. This chain is Interleukin-5 (IL5), found in Felis catus (Cat).